Consider the following 486-residue polypeptide: Homoserine O-acetyltransferase (486 aa).

The region spanning 66-436 (NVLVICHALT…PEGHDAFLLE (371 aa)) is the AB hydrolase-1 domain. Ser162 is an active-site residue. Catalysis depends on Ser162, which acts as the Nucleophile. The interval 248–274 (KFSRRSPSIAQQQKAQKAEVRKPSTVS) is disordered. Positions 250 to 262 (SRRSPSIAQQQKA) are enriched in polar residues. Active-site residues include Asp401 and His430.

Belongs to the AB hydrolase superfamily. MetX family.

It carries out the reaction L-homoserine + acetyl-CoA = O-acetyl-L-homoserine + CoA. Its pathway is amino-acid biosynthesis; L-methionine biosynthesis via de novo pathway; O-acetyl-L-homoserine from L-homoserine: step 1/1. Functionally, commits homoserine to the methionine biosynthesis pathway by catalyzing its O-acetylation. The sequence is that of Homoserine O-acetyltransferase (MET2) from Saccharomyces pastorianus (Lager yeast).